The primary structure comprises 206 residues: Ubiquitin-conjugating enzyme E2 S (206 aa).

In terms of domain architecture, UBC core spans 14–160 (QTIRQVMKEL…ARMMTEIHAQ (147 aa)). Residue C98 is the Glycyl thioester intermediate of the active site. Positions 165–191 (GVSDAKDDDGPSNKKHAGLDKKLQDKK) are disordered. Residues 168 to 191 (DAKDDDGPSNKKHAGLDKKLQDKK) are compositionally biased toward basic and acidic residues.

It belongs to the ubiquitin-conjugating enzyme family.

It catalyses the reaction S-ubiquitinyl-[E1 ubiquitin-activating enzyme]-L-cysteine + [E2 ubiquitin-conjugating enzyme]-L-cysteine = [E1 ubiquitin-activating enzyme]-L-cysteine + S-ubiquitinyl-[E2 ubiquitin-conjugating enzyme]-L-cysteine.. The protein operates within protein modification; protein ubiquitination. Catalyzes the covalent attachment of ubiquitin to other proteins. Acts as an essential factor of the anaphase promoting complex/cyclosome (APC/C), a cell cycle-regulated ubiquitin ligase that controls progression through mitosis. Acts by specifically elongating polyubiquitin chains initiated by the E2 enzyme vih/UbcH10 on APC/C substrates, enhancing the degradation of APC/C substrates by the proteasome and promoting mitotic exit. The protein is Ubiquitin-conjugating enzyme E2 S of Drosophila mojavensis (Fruit fly).